Consider the following 569-residue polypeptide: Methionine--tRNA ligase (569 aa).

The short motif at 11–21 is the 'HIGH' region element; that stretch reads PYINGVKHLGN. Residues cysteine 143, cysteine 146, cysteine 156, and cysteine 159 each contribute to the Zn(2+) site. Positions 342 to 346 match the 'KMSKS' region motif; that stretch reads KFSTS. Threonine 345 contacts ATP.

This sequence belongs to the class-I aminoacyl-tRNA synthetase family. MetG type 1 subfamily. As to quaternary structure, monomer. The cofactor is Zn(2+).

Its subcellular location is the cytoplasm. It catalyses the reaction tRNA(Met) + L-methionine + ATP = L-methionyl-tRNA(Met) + AMP + diphosphate. Is required not only for elongation of protein synthesis but also for the initiation of all mRNA translation through initiator tRNA(fMet) aminoacylation. This chain is Methionine--tRNA ligase, found in Caulobacter sp. (strain K31).